Consider the following 602-residue polypeptide: (R)-limonene synthase (602 aa).

Mg(2+) is bound by residues Asp356, Asp360, Asp500, Thr504, and Glu508. A DDXXD motif motif is present at residues Asp356 to Asp360.

It belongs to the terpene synthase family. It depends on Mg(2+) as a cofactor. The cofactor is Mn(2+).

The enzyme catalyses (2E)-geranyl diphosphate = (4R)-limonene + diphosphate. Catalyzes the formation of (R)-(+)-limonene, terpinolene, (1R,5S)-(+)-camphene, (1R,5R)-(+)-alpha-pinene, beta-myrcene and traces of alpha-phellandrene. The polypeptide is (R)-limonene synthase (Lavandula angustifolia (Lavender)).